A 261-amino-acid polypeptide reads, in one-letter code: Hemin import ATP-binding protein HmuV (261 aa).

In terms of domain architecture, ABC transporter spans 7–243 (LRGQNLSLQF…EIIDAVYGYK (237 aa)). 39 to 46 (GPNGAGKS) contacts ATP.

This sequence belongs to the ABC transporter superfamily. Heme (hemin) importer (TC 3.A.1.14.5) family. In terms of assembly, the complex is composed of two ATP-binding proteins (HmuV), two transmembrane proteins (HmuU) and a solute-binding protein (HmuT).

It localises to the cell inner membrane. Functionally, part of the ABC transporter complex HmuTUV involved in hemin import. Responsible for energy coupling to the transport system. The sequence is that of Hemin import ATP-binding protein HmuV from Vibrio vulnificus (strain YJ016).